Here is a 323-residue protein sequence, read N- to C-terminus: Fructose-1,6-bisphosphatase class 1 (323 aa).

Mg(2+)-binding residues include Glu-88, Asp-107, Leu-109, and Asp-110. Residues Asp-110 to Ser-113 and Asn-200 contribute to the substrate site. Glu-272 serves as a coordination point for Mg(2+).

The protein belongs to the FBPase class 1 family. As to quaternary structure, homotetramer. It depends on Mg(2+) as a cofactor.

The protein localises to the cytoplasm. It carries out the reaction beta-D-fructose 1,6-bisphosphate + H2O = beta-D-fructose 6-phosphate + phosphate. It participates in carbohydrate biosynthesis; gluconeogenesis. This is Fructose-1,6-bisphosphatase class 1 from Acinetobacter baumannii (strain AYE).